The primary structure comprises 341 residues: DNA-directed RNA polymerase subunit alpha (341 aa).

The interval methionine 1–glutamate 233 is alpha N-terminal domain (alpha-NTD). Residues isoleucine 269–phenylalanine 341 are alpha C-terminal domain (alpha-CTD).

It belongs to the RNA polymerase alpha chain family. In terms of assembly, in plastids the minimal PEP RNA polymerase catalytic core is composed of four subunits: alpha, beta, beta', and beta''. When a (nuclear-encoded) sigma factor is associated with the core the holoenzyme is formed, which can initiate transcription.

The protein localises to the plastid. It is found in the chloroplast. The enzyme catalyses RNA(n) + a ribonucleoside 5'-triphosphate = RNA(n+1) + diphosphate. Its function is as follows. DNA-dependent RNA polymerase catalyzes the transcription of DNA into RNA using the four ribonucleoside triphosphates as substrates. This is DNA-directed RNA polymerase subunit alpha from Lolium perenne (Perennial ryegrass).